The chain runs to 763 residues: Phosphoglycerol transferase I (763 aa).

4 helical membrane-spanning segments follow: residues Met1 to Ala21, Trp26 to Phe46, Ile77 to Ile97, and Phe108 to Phe128.

Belongs to the OpgB family.

Its subcellular location is the cell inner membrane. It carries out the reaction a phosphatidylglycerol + a membrane-derived-oligosaccharide D-glucose = a 1,2-diacyl-sn-glycerol + a membrane-derived-oligosaccharide 6-(glycerophospho)-D-glucose.. It participates in glycan metabolism; osmoregulated periplasmic glucan (OPG) biosynthesis. Its function is as follows. Transfers a phosphoglycerol residue from phosphatidylglycerol to the membrane-bound nascent glucan backbones. The polypeptide is Phosphoglycerol transferase I (Shigella boydii serotype 18 (strain CDC 3083-94 / BS512)).